Reading from the N-terminus, the 257-residue chain is Imidazole glycerol phosphate synthase subunit HisF (257 aa).

Active-site residues include Asp11 and Asp130.

Belongs to the HisA/HisF family. Heterodimer of HisH and HisF.

The protein localises to the cytoplasm. It carries out the reaction 5-[(5-phospho-1-deoxy-D-ribulos-1-ylimino)methylamino]-1-(5-phospho-beta-D-ribosyl)imidazole-4-carboxamide + L-glutamine = D-erythro-1-(imidazol-4-yl)glycerol 3-phosphate + 5-amino-1-(5-phospho-beta-D-ribosyl)imidazole-4-carboxamide + L-glutamate + H(+). It functions in the pathway amino-acid biosynthesis; L-histidine biosynthesis; L-histidine from 5-phospho-alpha-D-ribose 1-diphosphate: step 5/9. Its function is as follows. IGPS catalyzes the conversion of PRFAR and glutamine to IGP, AICAR and glutamate. The HisF subunit catalyzes the cyclization activity that produces IGP and AICAR from PRFAR using the ammonia provided by the HisH subunit. The protein is Imidazole glycerol phosphate synthase subunit HisF of Vibrio campbellii (strain ATCC BAA-1116).